The sequence spans 249 residues: uncharacterized protein (249 aa).

Residues 30-65 are a coiled coil; that stretch reads KVDKLKKLEIKKLEDQKKLKEQEEKHRLTLIRLANA. Residues 66–97 form a disordered region; that stretch reads PPQTNSINNNNNNNNNIKTNRPPLIYGEDKDK.

This is an uncharacterized protein from Dictyostelium discoideum (Social amoeba).